Reading from the N-terminus, the 249-residue chain is 3-deoxy-manno-octulosonate cytidylyltransferase (249 aa).

The protein belongs to the KdsB family.

The protein resides in the cytoplasm. It carries out the reaction 3-deoxy-alpha-D-manno-oct-2-ulosonate + CTP = CMP-3-deoxy-beta-D-manno-octulosonate + diphosphate. The protein operates within nucleotide-sugar biosynthesis; CMP-3-deoxy-D-manno-octulosonate biosynthesis; CMP-3-deoxy-D-manno-octulosonate from 3-deoxy-D-manno-octulosonate and CTP: step 1/1. It functions in the pathway bacterial outer membrane biogenesis; lipopolysaccharide biosynthesis. Its function is as follows. Activates KDO (a required 8-carbon sugar) for incorporation into bacterial lipopolysaccharide in Gram-negative bacteria. This chain is 3-deoxy-manno-octulosonate cytidylyltransferase, found in Coxiella burnetii (strain CbuG_Q212) (Coxiella burnetii (strain Q212)).